Consider the following 228-residue polypeptide: UPF0758 protein CLK_2387 (228 aa).

The MPN domain maps to Lys-106–Ile-228. Zn(2+) is bound by residues His-177, His-179, and Asp-190. Positions His-177 to Asp-190 match the JAMM motif motif.

Belongs to the UPF0758 family.

The chain is UPF0758 protein CLK_2387 from Clostridium botulinum (strain Loch Maree / Type A3).